The sequence spans 302 residues: uncharacterized protein (302 aa).

It belongs to the HAD-like hydrolase superfamily.

Its subcellular location is the cytoplasm. It is found in the nucleus. This is an uncharacterized protein from Schizosaccharomyces pombe (strain 972 / ATCC 24843) (Fission yeast).